A 728-amino-acid polypeptide reads, in one-letter code: Catalase-peroxidase (728 aa).

The segment at residues 91–218 (WHSAGTYRIA…LAAVQMGLIY (128 aa)) is a cross-link (tryptophyl-tyrosyl-methioninium (Trp-Tyr) (with M-244)). The active-site Proton acceptor is the histidine 92. Residues 218-244 (YVNPEGPDGNPDPVAAARDIRETFARM) constitute a cross-link (tryptophyl-tyrosyl-methioninium (Tyr-Met) (with W-91)). Histidine 259 serves as a coordination point for heme b.

Belongs to the peroxidase family. Peroxidase/catalase subfamily. As to quaternary structure, homodimer or homotetramer. Heme b serves as cofactor. Post-translationally, formation of the three residue Trp-Tyr-Met cross-link is important for the catalase, but not the peroxidase activity of the enzyme.

The catalysed reaction is H2O2 + AH2 = A + 2 H2O. The enzyme catalyses 2 H2O2 = O2 + 2 H2O. Bifunctional enzyme with both catalase and broad-spectrum peroxidase activity. The protein is Catalase-peroxidase of Burkholderia multivorans (strain ATCC 17616 / 249).